The following is a 1384-amino-acid chain: MASSSSMDIEGATQHLRDILKLDRPGNSAEASLVESQRKPSFNGELNGVLGSDLMGAAMVEPTVHNSDKLNGQDTQTICLSGDDGSICVPIRANIVEIVSSRDSSIDSKARGSNKVKIQPVAKYDWEHKYYYGNLIAVSNTYLAYAIRGANNHSMIRVLHLSSTERSLLKGFTGAVTDLAFAHLDSTLLGCVDEAGNMFIWQLTSHSSKIQDEVIVHIRRPEDTPLNSNRRLIWCPFIPEDNDESPEDACQTLALLHEDRAEVWDLDILRSNNSSWPVDATELKEGFITIRGHAARISEGALSPDGTVLATASHDGYVKFWQIYIEGQDQPRCLHEWQPHNGQPLSCLLFCDNHKKQDPDVPFWRFLITGADQNQELKMWCTVSWTCLQTIRFSPDPFNCGVLPSLKASLDLSAEFLILSDVQRKVLYVMELLQDQEKGRASFTAVSEFLLTHPVLSFGVQDVSRARLRHTEVLPPEEESESMTAEGNQGTSESRSGIQIKLYCVHTKSLQDVQIWFQPNQGDSSSLFMPQSGSQDGFSFSDPLADLNVEAMSSDKESGDSGSQNDLSKILPLPSPADFMSPAPSALPKLMTPDAFMTPSASMPASPGSSASSLTIVTAMSSSDSGARGGDDLTQSPKMSVECVNSSFANAGSPRSNSILISGLGENIQVSPPNPPLSLDLQAIDPMVVPQASPTRARSPDVISSASTAMSQDIPEIASETLQRGLSGANADSGPILHSDSMASAASILHLLSPRARSSAEHSLLPLELGAASVDGEQRLSNTPSLLETALSQENAGAAGGSCSDSSVNHAWPAAPDITRETRNSLRDNGLGDCSREEIKDRHISSPYHRRTYHLTQNDSQDASAEQSDHDDEVASLASSSGNCGPRSSHRLPVKDWKTSPRSSPKLKRKSKKDEGESSQSRQIESQMSTEVQDELLQMLRSQQREIAELRQNQLDLLQRVTSHMDAVQSSMMAHIEHAMLAQQEQEQRRMERILVEGQSRNQQLQDQLVQQLVQTLNNSLCNRLEKVLREEMKKTVPQTISKSLEPVTGQMNSTIAAKLTAVEGALKENVTKVVKSKNTTDAIGRAAAEAMQGPIQAAYKETFQSIVLPVFERGCQSMFQQINDSFKQGTNEYIQQLETHIKNRKQRDQDTRDPVIGQLQQMIDSLQSSQDQLASTVTASVSSDVQHQLHMIVGNLQDSILTQVQRIVKGEVSLAMKEQQAAVTSSIMQAMRSAAGTPVPSAHLDYQAQQASILQLLQQGQLNEAFQQALSAADLNLVLYVCETIDSQQVFGQQPCPLHQAVLLSLIQQLSTNLSTRTELKISYLEDAVMNLDHGDPVTRDHMSAVLTQVRQKLFLFLQQDAHSPMSKRARRLMMMLQGLVNH.

WD repeat units lie at residues 171–211, 227–274, 292–331, and 340–390; these read GFTG…SKIQ, NSNR…SNNS, GHAARISEGALSPDGTVLATASHDGYVKFWQIYIEGQDQP, and HNGQ…CLQT. Disordered regions lie at residues 471 to 494, 551 to 584, and 796 to 931; these read TEVLPPEEESESMTAEGNQGTSES, AMSSDKESGDSGSQNDLSKILPLPSPADFMSPAP, and AGAA…MSTE. Polar residues predominate over residues 482–494; the sequence is SMTAEGNQGTSES. Over residues 834-844 the composition is skewed to basic and acidic residues; it reads CSREEIKDRHI. 2 stretches are compositionally biased toward polar residues: residues 854-866 and 918-931; these read HLTQNDSQDASAE and SSQSRQIESQMSTE. Positions 930-1012 form a coiled coil; it reads TEVQDELLQM…QQLQDQLVQQ (83 aa).

The protein belongs to the WD repeat EDC4 family.

Its subcellular location is the cytoplasm. The protein localises to the P-body. The protein resides in the nucleus. Its function is as follows. In the process of mRNA degradation, seems to play a role in mRNA decapping. This is Enhancer of mRNA-decapping protein 4 (edc4) from Danio rerio (Zebrafish).